Here is a 49-residue protein sequence, read N- to C-terminus: MVIGLVIFVSVAAAIVGVLSNVLDMLMYVEENNEEDARIKEEQELLLLY.

A topological domain (virion surface) is located at residue Met1. The helical transmembrane segment at 2 to 22 (VIGLVIFVSVAAAIVGVLSNV) threads the bilayer. Residues 23 to 49 (LDMLMYVEENNEEDARIKEEQELLLLY) lie on the Intravirion side of the membrane.

Belongs to the orthopoxvirus OPG058 family.

It is found in the virion membrane. Its subcellular location is the host membrane. In terms of biological role, may play a role in cell adhesion and is important for virus virulence in vivo, although it is not required for the virus life cycle in cell cultures. This Vaccinia virus (strain Western Reserve) (VACV) protein is Protein OPG059 (OPG059).